A 222-amino-acid chain; its full sequence is N-(5'-phosphoribosyl)anthranilate isomerase (222 aa).

It belongs to the TrpF family.

It catalyses the reaction N-(5-phospho-beta-D-ribosyl)anthranilate = 1-(2-carboxyphenylamino)-1-deoxy-D-ribulose 5-phosphate. It participates in amino-acid biosynthesis; L-tryptophan biosynthesis; L-tryptophan from chorismate: step 3/5. The protein is N-(5'-phosphoribosyl)anthranilate isomerase of Gloeobacter violaceus (strain ATCC 29082 / PCC 7421).